The following is a 125-amino-acid chain: uncharacterized protein (125 aa).

Residues Gln50–Ser73 form a disordered region.

This is an uncharacterized protein from Microplitis demolitor (Parasitoid wasp).